The sequence spans 220 residues: Iron-sulfur cluster repair protein YtfE (220 aa).

The protein belongs to the RIC family. YtfE subfamily. Homodimer.

It is found in the cytoplasm. Its function is as follows. Di-iron-containing protein involved in the repair of iron-sulfur clusters damaged by oxidative and nitrosative stress conditions. The sequence is that of Iron-sulfur cluster repair protein YtfE from Escherichia coli O157:H7.